A 266-amino-acid chain; its full sequence is Glycine--tRNA ligase beta subunit (266 aa).

This sequence belongs to the class-II aminoacyl-tRNA synthetase family. As to quaternary structure, tetramer of two alpha and two beta subunits.

It localises to the cytoplasm. It catalyses the reaction tRNA(Gly) + glycine + ATP = glycyl-tRNA(Gly) + AMP + diphosphate. This chain is Glycine--tRNA ligase beta subunit (glyS), found in Moraxella catarrhalis (Branhamella catarrhalis).